The following is a 321-amino-acid chain: Putative membrane-bound redox modulator Alx (321 aa).

The Periplasmic portion of the chain corresponds to 1-6 (MNTVGT). A helical membrane pass occupies residues 7-27 (PLLWGGFAVVVAIMLAIDLLL). Topologically, residues 28–43 (QGRRGAHAMTMKQAAA) are cytoplasmic. A helical transmembrane segment spans residues 44–64 (WSLVWVTLSLLFNAAFWWYLV). Residues 65–89 (QTEGRAVADPQALAFLTGYLIEKSL) lie on the Periplasmic side of the membrane. Residues 90–110 (AVDNVFVWLMLFSYFSVPAAL) traverse the membrane as a helical segment. Over 111–113 (QRR) the chain is Cytoplasmic. The chain crosses the membrane as a helical span at residues 114–134 (VLVYGVLGAIVLRTIMIFTGS). Residue Trp135 is a topological domain, periplasmic. Residues 136-156 (LISQFDWILYIFGAFLLFTGV) traverse the membrane as a helical segment. Over 157–198 (KMALAHEDESGIGDKPLVRWLRGHLRMTDTIDNEHFFVRKNG) the chain is Cytoplasmic. The chain crosses the membrane as a helical span at residues 199 to 219 (LLYATPLMLVLILVELSDVIF). The Periplasmic segment spans residues 220-225 (AVDSIP). Residues 226–246 (AIFAVTTDPFIVLTSNLFAIL) form a helical membrane-spanning segment. Topologically, residues 247–261 (GLRAMYFLLAGVAER) are cytoplasmic. A helical transmembrane segment spans residues 262–282 (FSMLKYGLAVILVFIGIKMLI). The Periplasmic segment spans residues 283–286 (VDFY). Residues 287–307 (HIPIAVSLGVVFGILVMTFII) traverse the membrane as a helical segment. Over 308–321 (NAWVNYRHDKQRGG) the chain is Cytoplasmic.

The protein belongs to the TerC family.

It localises to the cell inner membrane. Its function is as follows. Has been proposed to be a redox modulator. The sequence is that of Putative membrane-bound redox modulator Alx from Escherichia coli (strain K12).